The primary structure comprises 298 residues: Junctional adhesion molecule A (298 aa).

Residues 1–28 form the signal peptide; the sequence is MGTEARAGRRQLLVFTSVVLSSLALGRG. 2 consecutive Ig-like V-type domains span residues 29-126 and 134-227; these read AVYT…VQLT and PTVH…EAVR. The Extracellular segment spans residues 29 to 237; the sequence is AVYTSEPDVR…MEAAELNVGG (209 aa). 2 cysteine pairs are disulfide-bonded: Cys-49/Cys-108 and Cys-152/Cys-211. Asn-184 carries N-linked (GlcNAc...) asparagine glycosylation. The chain crosses the membrane as a helical span at residues 238 to 258; that stretch reads IVAAVLVTLILLGFLILGIWF. Residues 259 to 298 lie on the Cytoplasmic side of the membrane; it reads AYRRGYFDRTKKGTSSKKVIYSQPAARSEGEFRQTSSFLV. A phosphoserine mark is found at Ser-280 and Ser-286.

The protein belongs to the immunoglobulin superfamily. Interacts with the ninth PDZ domain of MPDZ. Interacts with the first PDZ domain of PARD3. The association between PARD3 and PARD6B probably disrupts this interaction. Interacts with ITGAL (via I-domain). Interacts with CD151. In terms of assembly, (Microbial infection) Interacts with calicivirus capsid protein. As to quaternary structure, (Microbial infection) Interacts with the orthoreovirus sigma-1 capsid protein.

It is found in the cell junction. It localises to the tight junction. Its subcellular location is the cell membrane. Functionally, seems to play a role in epithelial tight junction formation. Appears early in primordial forms of cell junctions and recruits PARD3. The association of the PARD6-PARD3 complex may prevent the interaction of PARD3 with JAM1, thereby preventing tight junction assembly. Plays a role in regulating monocyte transmigration involved in integrity of epithelial barrier. Ligand for integrin alpha-L/beta-2 involved in memory T-cell and neutrophil transmigration. Involved in platelet activation. Its function is as follows. (Microbial infection) Acts as a functional receptor for murine norovirus. In terms of biological role, (Microbial infection) In case of orthoreovirus infection, serves as receptor for the virus. In Felis catus (Cat), this protein is Junctional adhesion molecule A (F11R).